A 511-amino-acid polypeptide reads, in one-letter code: Protoheme IX farnesyltransferase, mitochondrial (511 aa).

The N-terminal 23 residues, 1 to 23 (MSSSTESLPGTLRRTLTTSRAPA), are a transit peptide targeting the mitochondrion. Disordered stretches follow at residues 1-27 (MSSS…ATSS) and 50-136 (HDSA…LAPD). 3 stretches are compositionally biased toward low complexity: residues 52 to 79 (SASS…SSTT), 104 to 115 (RKAAAAAAAAAA), and 126 to 136 (PDAPTADLAPD). The next 8 membrane-spanning stretches (helical) occupy residues 168 to 188 (LTVL…VPSF), 197 to 217 (SLAP…TTLC), 253 to 273 (AAVL…YFGV), 275 to 295 (PTVS…YTPL), 303 to 323 (TWVG…AAAG), 344 to 364 (LGGW…FMPL), 398 to 418 (AFIP…SFAV), and 444 to 464 (ARGL…LALA).

This sequence belongs to the UbiA prenyltransferase family.

It is found in the mitochondrion membrane. Converts protoheme IX and farnesyl diphosphate to heme O. This chain is Protoheme IX farnesyltransferase, mitochondrial (pft-1), found in Neurospora crassa (strain ATCC 24698 / 74-OR23-1A / CBS 708.71 / DSM 1257 / FGSC 987).